We begin with the raw amino-acid sequence, 101 residues long: Antiviral protein CAP (101 aa).

In terms of biological role, has antiviral activity against tobacco mosaic virus and antitumor activity. The sequence is that of Antiviral protein CAP from Coprinus comatus (Shaggy mane).